A 252-amino-acid polypeptide reads, in one-letter code: 2-succinyl-6-hydroxy-2,4-cyclohexadiene-1-carboxylate synthase (252 aa).

Belongs to the AB hydrolase superfamily. MenH family. Monomer.

It carries out the reaction 5-enolpyruvoyl-6-hydroxy-2-succinyl-cyclohex-3-ene-1-carboxylate = (1R,6R)-6-hydroxy-2-succinyl-cyclohexa-2,4-diene-1-carboxylate + pyruvate. The protein operates within quinol/quinone metabolism; 1,4-dihydroxy-2-naphthoate biosynthesis; 1,4-dihydroxy-2-naphthoate from chorismate: step 3/7. It functions in the pathway quinol/quinone metabolism; menaquinone biosynthesis. Catalyzes a proton abstraction reaction that results in 2,5-elimination of pyruvate from 2-succinyl-5-enolpyruvyl-6-hydroxy-3-cyclohexene-1-carboxylate (SEPHCHC) and the formation of 2-succinyl-6-hydroxy-2,4-cyclohexadiene-1-carboxylate (SHCHC). This chain is 2-succinyl-6-hydroxy-2,4-cyclohexadiene-1-carboxylate synthase, found in Klebsiella pneumoniae subsp. pneumoniae (strain ATCC 700721 / MGH 78578).